The sequence spans 357 residues: MKLKLVAVAVTTLLAAGAVNAAEVYNKDGNKLDLYGKVHAQHYFSDDTGSDGDKTYARLGFKGETQINDQLTGFGQWEYEFKGNRSENQGSDKDKTRLAFAGLKFAEFGSFDYGRNYGVAYDIGAWTDVLPEFGGDTWTQTDVFMTGRTTGVATYRNTDFFGLVEGLNFAAQYQGKNDRDGVQEANGDGFGLSATYEYEGFGVGATYAKSDRTDKQVNAASNFNANGKNAEVWAAGLKYDANDIYLAATYSETLNMTTFGDDHIANKTQNFEAVAQYQFDFGLRPSIAYLKSKGKDIGSWGDQDLVEYIDLGATYYFNKNMSTFVDYKINLLDDTNFTKDARVSTDNVVAVGLNYQF.

The first 21 residues, 1-21 (MKLKLVAVAVTTLLAAGAVNA), serve as a signal peptide directing secretion.

Belongs to the Gram-negative porin family. Homotrimer.

Its subcellular location is the cell outer membrane. In terms of biological role, forms pores that allow passive diffusion of small molecules across the outer membrane. The polypeptide is Outer membrane porin protein OmpD (ompD) (Citrobacter koseri (strain ATCC BAA-895 / CDC 4225-83 / SGSC4696)).